Consider the following 35-residue polypeptide: U2-agatoxin-Aop1a (35 aa).

Intrachain disulfides connect cysteine 3/cysteine 19, cysteine 10/cysteine 24, and cysteine 18/cysteine 34. Leucine 35 is subject to Leucine amide.

This sequence belongs to the neurotoxin 01 (U2-agtx) family. As to expression, expressed by the venom gland.

The protein localises to the secreted. Insect-selective toxin causing rapid but reversible paralysis in crickets. Suppresses the excitatory postsynaptic potentials evoked in lobster neuromuscular synaptic preparations, possibly by blocking the presynaptic calcium channel (Cav). Induces instantaneous reversible paralysis when injected into crickets. The sequence is that of U2-agatoxin-Aop1a from Allagelena opulenta (Funnel weaving spider).